Here is a 571-residue protein sequence, read N- to C-terminus: Alpha-1D adrenergic receptor (571 aa).

The Extracellular segment spans residues 1–94; the sequence is MTFRDLLSVN…AVGGLVVSAQ (94 aa). The segment at 13-75 is disordered; it reads GSRSDGSAGG…SSAGEPGAAG (63 aa). A compositionally biased stretch (gly residues) spans 19–34; sequence SAGGASAGGSGGGSGG. Over residues 35-47 the composition is skewed to low complexity; the sequence is AAASEGRAVDGVP. The segment covering 48 to 57 has biased composition (gly residues); sequence GTAGSGGVVG. N-linked (GlcNAc...) asparagine glycans are attached at residues Asn64 and Asn81. A helical membrane pass occupies residues 95–120; the sequence is GVGVGVFLAAFILMAVAGNLLVILSV. Over 121–132 the chain is Cytoplasmic; it reads ACNRHLQTVTNY. Residues 133–158 form a helical membrane-spanning segment; sequence FIVNLAVADLLLSATVLPFSATMEVL. At 159–168 the chain is on the extracellular side; it reads GFWAFGRAFC. Residues 169–191 traverse the membrane as a helical segment; it reads DVWAAVDVLCCTASILSLCTISV. The Cytoplasmic portion of the chain corresponds to 192 to 212; the sequence is DRYVGVRHSLKYPSIMTERKA. Residues 213–237 traverse the membrane as a helical segment; it reads AAILALLWAVAIVVSVGPLLGWKEP. Residues 238 to 250 are Extracellular-facing; the sequence is VPPDERFCGITEE. Residues 251–274 form a helical membrane-spanning segment; sequence AGYAVFSSLCSFYLPMAVIVVMYC. Over 275-348 the chain is Cytoplasmic; the sequence is RVYVVARSTT…KFSREKKAAK (74 aa). Residues 349-373 form a helical membrane-spanning segment; sequence TLAIVVGVFVLCWFPFFFVLPLGSL. At 374-380 the chain is on the extracellular side; the sequence is FPQLKPS. The helical transmembrane segment at 381–405 threads the bilayer; it reads EGVFKVIFWLGYFNSCVNPLIYPCS. Topologically, residues 406 to 571 are cytoplasmic; that stretch reads SREFKRAFLR…DYSHLRETDI (166 aa). Cys419 carries the S-palmitoyl cysteine lipid modification. A disordered region spans residues 465–487; that stretch reads LPAPEATDTPSAPEAQAPVVGRR.

This sequence belongs to the G-protein coupled receptor 1 family. Adrenergic receptor subfamily. ADRA1D sub-subfamily. Interacts with FLNA (via filamin repeat 21); increases PKA-mediated phosphorylation of FLNA. Palmitoylated. Palmitoylation by ZDHHC21 may increase the expression of the receptor and regulate downstream signaling.

It localises to the cell membrane. This alpha-adrenergic receptor mediates its effect through the influx of extracellular calcium. This Sus scrofa (Pig) protein is Alpha-1D adrenergic receptor (ADRA1D).